A 350-amino-acid chain; its full sequence is MAYNFVRSYIDTFRERTAAISHTSTFRETGQITPEEFVLAGDFLVFKFPSWQWGDASSAGKRVPYLPEGKQYLMTRGVPCHRRLDDNFAGEAGQDETIVGDGFAGSEGADDDGWLRTGGMAASQEAKVRDVRTVDESGNLGAAEEEDEIPDMEDMDDDEEAIIRDPQGGSSSTAPLRTYTLYICYSAHYRTPRLYLSGYGATSVPLKPQEMMEDIVGDYKDKTVTIEDFPFFEHALKTASVHPCKHASVMKVLLDRADAALKLRLAKLKAGKDIGKLDTGMEGLVDDTRLLKLSEQAKGKEGDEAKDDWEVLSEGGDDEVAIRVDQYLVVFLKFMASVTPGIEHDFTMGV.

Residues 87–165 (NFAGEAGQDE…DDDEEAIIRD (79 aa)) are flexible region. Over residues 126–135 (AKVRDVRTVD) the composition is skewed to basic and acidic residues. The tract at residues 126–153 (AKVRDVRTVDESGNLGAAEEEDEIPDME) is disordered. Positions 143 to 153 (AEEEDEIPDME) are enriched in acidic residues. The Glycyl thioester intermediate role is filled by Cys244. The interval 248 to 326 (SVMKVLLDRA…DDEVAIRVDQ (79 aa)) is handle region.

It belongs to the ATG3 family. Monomer. Interacts with ATG8 through an intermediate thioester bond through the C-terminal Gly of ATG8. Also interacts with the 40 amino acid C-terminal region of the E1-like ATG7 enzyme. Also interacts with the ATG12-ATG5 conjugate.

It localises to the cytoplasm. Its function is as follows. E2 conjugating enzyme required for the cytoplasm to vacuole transport (Cvt) and autophagy. Required for selective autophagic degradation of the nucleus (nucleophagy) as well as for mitophagy which contributes to regulate mitochondrial quantity and quality by eliminating the mitochondria to a basal level to fulfill cellular energy requirements and preventing excess ROS production. Responsible for the E2-like covalent binding of phosphatidylethanolamine to the C-terminal Gly of ATG8. The ATG12-ATG5 conjugate plays a role of an E3 and promotes the transfer of ATG8 from ATG3 to phosphatidylethanolamine (PE). This step is required for the membrane association of ATG8. The formation of the ATG8-phosphatidylethanolamine conjugate is essential for autophagy and for the cytoplasm to vacuole transport (Cvt). The ATG8-PE conjugate mediates tethering between adjacent membranes and stimulates membrane hemifusion, leading to expansion of the autophagosomal membrane during autophagy. This chain is Autophagy-related protein 3 (ATG3), found in Phaeosphaeria nodorum (strain SN15 / ATCC MYA-4574 / FGSC 10173) (Glume blotch fungus).